We begin with the raw amino-acid sequence, 1462 residues long: Gag-Pol polyprotein (1462 aa).

G2 carries N-myristoyl glycine; by host lipidation. Residues 7-31 are interaction with Gp41; the sequence is VLRGKKADELEKIRLRPGGKKKYRL. The short motif at 16–22 is the Nuclear export signal element; it reads LEKIRLR. The short motif at 26 to 32 is the Nuclear localization signal element; the sequence is KKKYRLK. Residues 191-228 form an interaction with human PPIA/CYPA and NUP153 region; that stretch reads NCVGDHQAAMQIIREIINEEAADWDVQHPIPGPLPAGQ. The tract at residues 279–364 is dimerization/Multimerization of capsid protein p24; it reads YNPTNILDIK…GGPGQKARLM (86 aa). 2 CCHC-type zinc fingers span residues 388-405 and 409-426; these read IKCWNCGKEGHSARQCRA and QGCWKCGKSGHIMANCPD. The segment at 441-507 is disordered; that stretch reads APQLPRGPKF…RRDTTQRDDR (67 aa). Residues 454 to 468 are compositionally biased toward low complexity; it reads NTNSTPNGSSSGPTG. 2 stretches are compositionally biased toward basic and acidic residues: residues 471-490 and 497-507; these read HAAREKTERAETKTIQRSDR and ARRDTTQRDDR. Positions 512–516 are dimerization of protease; the sequence is PQFSL. One can recognise a Peptidase A2 domain in the interval 531–600; it reads VEVLLDTGAD…TPINIFGRNI (70 aa). D536 functions as the For protease activity; shared with dimeric partner in the catalytic mechanism. Dimerization of protease regions lie at residues 560–566 and 599–611; these read GIGGFIN and NILTALGMSLNLP. In terms of domain architecture, Reverse transcriptase spans 654–844; it reads EGQLEEAPPT…PPYQWMGYEL (191 aa). Positions 720, 795, and 796 each coordinate Mg(2+). The RT 'primer grip' stretch occupies residues 837-845; the sequence is YQWMGYELW. The Tryptophan repeat motif signature appears at 1007–1023; that stretch reads WEQWWDNYWQVTWIPDW. Residues 1043–1166 form the RNase H type-1 domain; that stretch reads IPGAETFYTD…IDHLVSQGIR (124 aa). Mg(2+)-binding residues include D1052, E1087, D1107, and D1158. An Integrase-type zinc finger spans residues 1172 to 1213; the sequence is ERIEPAQEEHGKYHSNVKELAHKFGLPNLVARQIVNTCAQCQ. Positions 1181, 1185, 1209, and 1212 each coordinate Zn(2+). The region spanning 1222 to 1373 is the Integrase catalytic domain; sequence QVNAELGTWQ…TPVERLVNMI (152 aa). Residues D1233, D1285, and E1321 each contribute to the Mg(2+) site. Residues 1392–1439 constitute a DNA-binding region (integrase-type); the sequence is FRVYFREGRNQLWQGPGELLWKGDGAVIVKVGTDIKVIPRRKAKIIRD. The tract at residues 1443 to 1462 is disordered; sequence RQEMDSGSHLEGAREDGEMA.

As to quaternary structure, homotrimer; further assembles as hexamers of trimers. Interacts with gp41 (via C-terminus). Interacts with host CALM1; this interaction induces a conformational change in the Matrix protein, triggering exposure of the myristate group. Interacts with host AP3D1; this interaction allows the polyprotein trafficking to multivesicular bodies during virus assembly. Part of the pre-integration complex (PIC) which is composed of viral genome, matrix protein, Vpr and integrase. Homodimer; the homodimer further multimerizes as homohexamers or homopentamers. Interacts with human PPIA/CYPA. Interacts with human NUP153. Interacts with host PDZD8; this interaction stabilizes the capsid. Interacts with monkey TRIM5; this interaction destabilizes the capsid. In terms of assembly, homodimer, whose active site consists of two apposed aspartic acid residues. As to quaternary structure, heterodimer of p66 RT and p51 RT (RT p66/p51). Heterodimerization of RT is essential for DNA polymerase activity. The overall folding of the subdomains is similar in p66 RT and p51 RT but the spatial arrangements of the subdomains are dramatically different. Homotetramer; may further associate as a homohexadecamer. Part of the pre-integration complex (PIC) which is composed of viral genome, matrix protein, Vpr and integrase. Interacts with human SMARCB1/INI1 and human PSIP1/LEDGF isoform 1. Interacts with human KPNA3; this interaction might play a role in nuclear import of the pre-integration complex. Interacts with human NUP153; this interaction might play a role in nuclear import of the pre-integration complex. Mg(2+) is required as a cofactor. Post-translationally, specific enzymatic cleavages by the viral protease yield mature proteins. The protease is released by autocatalytic cleavage. The polyprotein is cleaved during and after budding, this process is termed maturation. Proteolytic cleavage of p66 RT removes the RNase H domain to yield the p51 RT subunit. Nucleocapsid protein p7 might be further cleaved after virus entry.

The protein resides in the host cell membrane. Its subcellular location is the host endosome. The protein localises to the host multivesicular body. It is found in the virion membrane. It localises to the host nucleus. The protein resides in the host cytoplasm. Its subcellular location is the virion. The catalysed reaction is Endopeptidase for which the P1 residue is preferably hydrophobic.. It carries out the reaction Endohydrolysis of RNA in RNA/DNA hybrids. Three different cleavage modes: 1. sequence-specific internal cleavage of RNA. Human immunodeficiency virus type 1 and Moloney murine leukemia virus enzymes prefer to cleave the RNA strand one nucleotide away from the RNA-DNA junction. 2. RNA 5'-end directed cleavage 13-19 nucleotides from the RNA end. 3. DNA 3'-end directed cleavage 15-20 nucleotides away from the primer terminus.. The enzyme catalyses 3'-end directed exonucleolytic cleavage of viral RNA-DNA hybrid.. It catalyses the reaction DNA(n) + a 2'-deoxyribonucleoside 5'-triphosphate = DNA(n+1) + diphosphate. With respect to regulation, protease: The viral protease is inhibited by many synthetic protease inhibitors (PIs), such as amprenavir, atazanavir, indinavir, loprinavir, nelfinavir, ritonavir and saquinavir. Use of protease inhibitors in tritherapy regimens permit more ambitious therapeutic strategies. Reverse transcriptase/ribonuclease H: RT can be inhibited either by nucleoside RT inhibitors (NRTIs) or by non nucleoside RT inhibitors (NNRTIs). NRTIs act as chain terminators, whereas NNRTIs inhibit DNA polymerization by binding a small hydrophobic pocket near the RT active site and inducing an allosteric change in this region. Classical NRTIs are abacavir, adefovir (PMEA), didanosine (ddI), lamivudine (3TC), stavudine (d4T), tenofovir (PMPA), zalcitabine (ddC), and zidovudine (AZT). Classical NNRTIs are atevirdine (BHAP U-87201E), delavirdine, efavirenz (DMP-266), emivirine (I-EBU), and nevirapine (BI-RG-587). The tritherapies used as a basic effective treatment of AIDS associate two NRTIs and one NNRTI. Functionally, mediates, with Gag polyprotein, the essential events in virion assembly, including binding the plasma membrane, making the protein-protein interactions necessary to create spherical particles, recruiting the viral Env proteins, and packaging the genomic RNA via direct interactions with the RNA packaging sequence (Psi). Gag-Pol polyprotein may regulate its own translation, by the binding genomic RNA in the 5'-UTR. At low concentration, the polyprotein would promote translation, whereas at high concentration, the polyprotein would encapsidate genomic RNA and then shut off translation. Targets the polyprotein to the plasma membrane via a multipartite membrane-binding signal, that includes its myristoylated N-terminus. Matrix protein is part of the pre-integration complex. Implicated in the release from host cell mediated by Vpu. Binds to RNA. In terms of biological role, forms the conical core that encapsulates the genomic RNA-nucleocapsid complex in the virion. Most core are conical, with only 7% tubular. The core is constituted by capsid protein hexamer subunits. The core is disassembled soon after virion entry. Host restriction factors such as TRIM5-alpha or TRIMCyp bind retroviral capsids and cause premature capsid disassembly, leading to blocks in reverse transcription. Capsid restriction by TRIM5 is one of the factors which restricts HIV-1 to the human species. Host PIN1 apparently facilitates the virion uncoating. On the other hand, interactions with PDZD8 or CYPA stabilize the capsid. Its function is as follows. Encapsulates and protects viral dimeric unspliced genomic RNA (gRNA). Binds these RNAs through its zinc fingers. Acts as a nucleic acid chaperone which is involved in rearangement of nucleic acid secondary structure during gRNA retrotranscription. Also facilitates template switch leading to recombination. As part of the polyprotein, participates in gRNA dimerization, packaging, tRNA incorporation and virion assembly. Functionally, aspartyl protease that mediates proteolytic cleavages of Gag and Gag-Pol polyproteins during or shortly after the release of the virion from the plasma membrane. Cleavages take place as an ordered, step-wise cascade to yield mature proteins. This process is called maturation. Displays maximal activity during the budding process just prior to particle release from the cell. Also cleaves Nef and Vif, probably concomitantly with viral structural proteins on maturation of virus particles. Hydrolyzes host EIF4GI and PABP1 in order to shut off the capped cellular mRNA translation. The resulting inhibition of cellular protein synthesis serves to ensure maximal viral gene expression and to evade host immune response. Multifunctional enzyme that converts the viral RNA genome into dsDNA in the cytoplasm, shortly after virus entry into the cell. This enzyme displays a DNA polymerase activity that can copy either DNA or RNA templates, and a ribonuclease H (RNase H) activity that cleaves the RNA strand of RNA-DNA heteroduplexes in a partially processive 3' to 5' endonucleasic mode. Conversion of viral genomic RNA into dsDNA requires many steps. A tRNA(3)-Lys binds to the primer-binding site (PBS) situated at the 5'-end of the viral RNA. RT uses the 3' end of the tRNA primer to perform a short round of RNA-dependent minus-strand DNA synthesis. The reading proceeds through the U5 region and ends after the repeated (R) region which is present at both ends of viral RNA. The portion of the RNA-DNA heteroduplex is digested by the RNase H, resulting in a ssDNA product attached to the tRNA primer. This ssDNA/tRNA hybridizes with the identical R region situated at the 3' end of viral RNA. This template exchange, known as minus-strand DNA strong stop transfer, can be either intra- or intermolecular. RT uses the 3' end of this newly synthesized short ssDNA to perform the RNA-dependent minus-strand DNA synthesis of the whole template. RNase H digests the RNA template except for two polypurine tracts (PPTs) situated at the 5'-end and near the center of the genome. It is not clear if both polymerase and RNase H activities are simultaneous. RNase H probably can proceed both in a polymerase-dependent (RNA cut into small fragments by the same RT performing DNA synthesis) and a polymerase-independent mode (cleavage of remaining RNA fragments by free RTs). Secondly, RT performs DNA-directed plus-strand DNA synthesis using the PPTs that have not been removed by RNase H as primers. PPTs and tRNA primers are then removed by RNase H. The 3' and 5' ssDNA PBS regions hybridize to form a circular dsDNA intermediate. Strand displacement synthesis by RT to the PBS and PPT ends produces a blunt ended, linear dsDNA copy of the viral genome that includes long terminal repeats (LTRs) at both ends. In terms of biological role, catalyzes viral DNA integration into the host chromosome, by performing a series of DNA cutting and joining reactions. This enzyme activity takes place after virion entry into a cell and reverse transcription of the RNA genome in dsDNA. The first step in the integration process is 3' processing. This step requires a complex comprising the viral genome, matrix protein, Vpr and integrase. This complex is called the pre-integration complex (PIC). The integrase protein removes 2 nucleotides from each 3' end of the viral DNA, leaving recessed CA OH's at the 3' ends. In the second step, the PIC enters cell nucleus. This process is mediated through integrase and Vpr proteins, and allows the virus to infect a non dividing cell. This ability to enter the nucleus is specific of lentiviruses, other retroviruses cannot and rely on cell division to access cell chromosomes. In the third step, termed strand transfer, the integrase protein joins the previously processed 3' ends to the 5' ends of strands of target cellular DNA at the site of integration. The 5'-ends are produced by integrase-catalyzed staggered cuts, 5 bp apart. A Y-shaped, gapped, recombination intermediate results, with the 5'-ends of the viral DNA strands and the 3' ends of target DNA strands remaining unjoined, flanking a gap of 5 bp. The last step is viral DNA integration into host chromosome. This involves host DNA repair synthesis in which the 5 bp gaps between the unjoined strands are filled in and then ligated. Since this process occurs at both cuts flanking the HIV genome, a 5 bp duplication of host DNA is produced at the ends of HIV-1 integration. Alternatively, Integrase may catalyze the excision of viral DNA just after strand transfer, this is termed disintegration. The chain is Gag-Pol polyprotein (gag-pol) from Human immunodeficiency virus type 2 subtype A (isolate SBLISY) (HIV-2).